A 467-amino-acid chain; its full sequence is Pentatricopeptide repeat-containing protein At1g77170, mitochondrial (467 aa).

The transit peptide at 1–30 (MFFSGLISKLHVHGTKRTNHFTIFHRLNHF) directs the protein to the mitochondrion. PPR repeat units lie at residues 81–115 (IAFLWNNIMRSYIRHESPLDAIQVYLGMVRSTVLP), 116–150 (DRYSLPIVIKAAVQIHDFTLGKELHSVAVRLGFVG), 151–181 (DEFCESGFITLYCKAGEFENARKVFDENPER), 182–216 (KLGSWNAIIGGLNHAGRANEAVEMFVDMKRSGLEP), 217–251 (DDFTMVSVTASCGGLGDLSLAFQLHKCVLQAKTEE), 254–284 (DIMMLNSLIDMYGKCGRMDLASHIFEEMRQR), 285–319 (NVVSWSSMIVGYAANGNTLEALECFRQMREFGVRP), 320–350 (NKITFVGVLSACVHGGLVEEGKTYFAMMKSE), and 356–386 (GLSHYGCIVDLLSRDGQLKEAKKVVEEMPMK). Residues 391-466 (VWGCLMGGCE…IPAYSYASTT (76 aa)) form a type E motif region.

The protein belongs to the PPR family. PCMP-E subfamily.

The protein resides in the mitochondrion. The polypeptide is Pentatricopeptide repeat-containing protein At1g77170, mitochondrial (PCMP-E21) (Arabidopsis thaliana (Mouse-ear cress)).